We begin with the raw amino-acid sequence, 283 residues long: 4-diphosphocytidyl-2-C-methyl-D-erythritol kinase (283 aa).

Residue lysine 10 is part of the active site. Residue 99-109 (PMGGGLGGGSS) coordinates ATP. Aspartate 141 is a catalytic residue.

This sequence belongs to the GHMP kinase family. IspE subfamily. As to quaternary structure, homodimer.

The catalysed reaction is 4-CDP-2-C-methyl-D-erythritol + ATP = 4-CDP-2-C-methyl-D-erythritol 2-phosphate + ADP + H(+). Its pathway is isoprenoid biosynthesis; isopentenyl diphosphate biosynthesis via DXP pathway; isopentenyl diphosphate from 1-deoxy-D-xylulose 5-phosphate: step 3/6. Functionally, catalyzes the phosphorylation of the position 2 hydroxy group of 4-diphosphocytidyl-2C-methyl-D-erythritol. This chain is 4-diphosphocytidyl-2-C-methyl-D-erythritol kinase, found in Salmonella arizonae (strain ATCC BAA-731 / CDC346-86 / RSK2980).